Here is a 222-residue protein sequence, read N- to C-terminus: Transcriptional regulatory protein PmrA (222 aa).

The 115-residue stretch at 2–116 (KLLIVEDDKL…ELQARVRALI (115 aa)) folds into the Response regulatory domain. Asp51 carries the 4-aspartylphosphate modification. The segment at residues 124–218 (NSKIQVDNIT…LRGFGYLLTK (95 aa)) is a DNA-binding region (ompR/PhoB-type).

In terms of processing, phosphorylated by PmrB.

The protein resides in the cytoplasm. Member of the two-component regulatory system PmrB/PmrA involved in regulation of virulence. Unphosphorylated PmrA represses extracellular enzyme genes. Phosphorylation of PmrA by PmrB relieves such repression, which leads to activation of extracellular enzyme genes. Phosphorylated PmrA seems to repress expression of the pmrCAB operon. This Pectobacterium parmentieri protein is Transcriptional regulatory protein PmrA (pmrA).